The following is a 756-amino-acid chain: Serine/threonine-protein kinase tousled-like 1-B (756 aa).

2 stretches are compositionally biased toward low complexity: residues 1-12 and 23-34; these read MSVQSNSNSSGS and STGSPTPGSVSP. 2 disordered regions span residues 1-56 and 69-185; these read MSVQ…LDPR and VSGN…QNSS. Basic and acidic residues predominate over residues 45–56; it reads EGMDELHSLDPR. Gly residues predominate over residues 72–85; the sequence is NTGGSTGSASGGPK. Positions 93–103 are enriched in low complexity; it reads SSHSFGSLGSS. The segment covering 104 to 120 has biased composition (basic and acidic residues); that stretch reads SDKESETPEKKHFESSR. The stretch at 243–268 forms a coiled coil; sequence DLRRQIDEQQKLLERFKERLNKCTTM. Residues 339-375 are disordered; that stretch reads KLLAKRKPSSTPSSQSPTPNESKQRKTKAVNGADNDP. The span at 347-357 shows a compositional bias: low complexity; that stretch reads SSTPSSQSPTP. Residues 397-435 are a coiled coil; it reads FKLRLGHLKKEEAEIQAELERLERVRNLHIRELKRINNE. Residues 450 to 728 form the Protein kinase domain; that stretch reads YLLLHLLGRG…VHQLGSDSYL (279 aa). ATP-binding positions include 456-464 and lysine 479; that span reads LGRGGFSEV. The active-site Proton acceptor is the aspartate 580. The tract at residues 734 to 756 is disordered; that stretch reads RSNSSGNLQATPASPAPSGIISY. The segment covering 735 to 745 has biased composition (polar residues); it reads SNSSGNLQATP.

The protein belongs to the protein kinase superfamily. Ser/Thr protein kinase family. It depends on Mg(2+) as a cofactor.

It is found in the nucleus. It carries out the reaction L-seryl-[protein] + ATP = O-phospho-L-seryl-[protein] + ADP + H(+). It catalyses the reaction L-threonyl-[protein] + ATP = O-phospho-L-threonyl-[protein] + ADP + H(+). The protein is Serine/threonine-protein kinase tousled-like 1-B (tlk1b) of Danio rerio (Zebrafish).